We begin with the raw amino-acid sequence, 470 residues long: Argininosuccinate lyase (470 aa).

This sequence belongs to the lyase 1 family. Argininosuccinate lyase subfamily.

The protein resides in the cytoplasm. It catalyses the reaction 2-(N(omega)-L-arginino)succinate = fumarate + L-arginine. The protein operates within amino-acid biosynthesis; L-arginine biosynthesis; L-arginine from L-ornithine and carbamoyl phosphate: step 3/3. The protein is Argininosuccinate lyase of Mycobacterium marinum (strain ATCC BAA-535 / M).